The primary structure comprises 135 residues: Small ribosomal subunit protein uS8 (135 aa).

It belongs to the universal ribosomal protein uS8 family. As to quaternary structure, part of the 30S ribosomal subunit. Contacts proteins S5 and S12.

Functionally, one of the primary rRNA binding proteins, it binds directly to 16S rRNA central domain where it helps coordinate assembly of the platform of the 30S subunit. This is Small ribosomal subunit protein uS8 from Salinispora arenicola (strain CNS-205).